A 182-amino-acid polypeptide reads, in one-letter code: Large ribosomal subunit protein uL5 (182 aa).

This sequence belongs to the universal ribosomal protein uL5 family. Part of the 50S ribosomal subunit; part of the 5S rRNA/L5/L18/L25 subcomplex. Contacts the 5S rRNA and the P site tRNA. Forms a bridge to the 30S subunit in the 70S ribosome.

Its function is as follows. This is one of the proteins that bind and probably mediate the attachment of the 5S RNA into the large ribosomal subunit, where it forms part of the central protuberance. In the 70S ribosome it contacts protein S13 of the 30S subunit (bridge B1b), connecting the 2 subunits; this bridge is implicated in subunit movement. Contacts the P site tRNA; the 5S rRNA and some of its associated proteins might help stabilize positioning of ribosome-bound tRNAs. In Acidobacterium capsulatum (strain ATCC 51196 / DSM 11244 / BCRC 80197 / JCM 7670 / NBRC 15755 / NCIMB 13165 / 161), this protein is Large ribosomal subunit protein uL5.